Here is a 78-residue protein sequence, read N- to C-terminus: U7-lycotoxin-Ls1h (78 aa).

An N-terminal signal peptide occupies residues Met1 to Ala22. Positions Gln23–Gly26 are excised as a propeptide.

This sequence belongs to the neurotoxin 19 (CSTX) family. 07 (U7-Lctx) subfamily. In terms of processing, contains 4 disulfide bonds. Expressed by the venom gland.

It localises to the secreted. This chain is U7-lycotoxin-Ls1h, found in Lycosa singoriensis (Wolf spider).